A 387-amino-acid polypeptide reads, in one-letter code: tRNA N6-adenosine threonylcarbamoyltransferase (387 aa).

Residues histidine 112 and histidine 116 each coordinate Fe cation. Substrate-binding positions include 134-138 (LASGG), aspartate 167, glycine 180, and asparagine 325. Aspartate 353 contributes to the Fe cation binding site.

Belongs to the KAE1 / TsaD family. Fe(2+) is required as a cofactor.

It localises to the cytoplasm. The enzyme catalyses L-threonylcarbamoyladenylate + adenosine(37) in tRNA = N(6)-L-threonylcarbamoyladenosine(37) in tRNA + AMP + H(+). Required for the formation of a threonylcarbamoyl group on adenosine at position 37 (t(6)A37) in tRNAs that read codons beginning with adenine. Is involved in the transfer of the threonylcarbamoyl moiety of threonylcarbamoyl-AMP (TC-AMP) to the N6 group of A37, together with TsaE and TsaB. TsaD likely plays a direct catalytic role in this reaction. This is tRNA N6-adenosine threonylcarbamoyltransferase from Rickettsia prowazekii (strain Madrid E).